The sequence spans 472 residues: Peptidoglycan endopeptidase RipA (472 aa).

The tat-type signal signal peptide spans 1–39; sequence MRRNRRGSPARPAARFVRPAIPSALSVALLVCTPGLATA. Positions 340 to 472 constitute a NlpC/P60 domain; sequence RQASEYVIRR…TPYVVRYIEY (133 aa). Residue Cys383 is the Nucleophile of the active site. Catalysis depends on His432, which acts as the Proton acceptor. Glu444 is a catalytic residue.

Belongs to the peptidase C40 family. In terms of assembly, monomer. Interacts with RpfB and PBP1A (ponA1) via residues 448-472 of RipA, interacts with RpfE. Interacts with the chaperone MoxR1. RipA-MoxR1 interaction in the cytoplasm leads to proper folding of RipA, resulting in its secretion. Also interacts with Mce2B. In terms of processing, exported by the Tat system. The position of the signal peptide cleavage has not been experimentally proven.

The protein resides in the secreted. Its activity is regulated as follows. MoxR1-mediated folding is critical for secretion via the TAT system. The synergistic effects on peptidoglycan degradation of RipA plus RpfB are inhibited by addition of PBP1A (ponA1). Peptidoglycan endopeptidase that cleaves the bond between D-glutamate and meso-diaminopimelate. Binds and degrades high-molecular weight peptidoglycan from a number of Actinobacteria; activity is increased in the presence of RpfB and inhibited by PBP1A (ponA1). Required for normal separation of daughter cells after cell division and for cell wall integrity. Required for host cell invasion and intracellular survival in host macrophages. This is Peptidoglycan endopeptidase RipA (ripA) from Mycobacterium tuberculosis (strain ATCC 25618 / H37Rv).